We begin with the raw amino-acid sequence, 471 residues long: Variant surface glycoprotein ILTAT 1.21 (471 aa).

A signal peptide spans 1-21; sequence MLRALLPSTTLALILAGGGHA. N-linked (GlcNAc...) asparagine glycans are attached at residues Asn64 and Asn405. The disordered stretch occupies residues 406 to 449; sequence ATADECPETRCEYDSEKNECRPKKGTETTATGPGERTTPADGKA. The span at 412-431 shows a compositional bias: basic and acidic residues; the sequence is PETRCEYDSEKNECRPKKGT. Asn450 carries an N-linked (GlcNAc...) asparagine glycan. Ser454 carries GPI-anchor amidated serine lipidation. Positions 455–471 are cleaved as a propeptide — removed in mature form; the sequence is DSLLIKTSPLWLAFLLF.

It is found in the cell membrane. In terms of biological role, VSG forms a coat on the surface of the parasite. The trypanosome evades the immune response of the host by expressing a series of antigenically distinct VSGs from an estimated 1000 VSG genes. The sequence is that of Variant surface glycoprotein ILTAT 1.21 from Trypanosoma brucei brucei.